A 200-amino-acid chain; its full sequence is 3-isopropylmalate dehydratase small subunit (200 aa).

It belongs to the LeuD family. LeuD type 1 subfamily. In terms of assembly, heterodimer of LeuC and LeuD.

It catalyses the reaction (2R,3S)-3-isopropylmalate = (2S)-2-isopropylmalate. It participates in amino-acid biosynthesis; L-leucine biosynthesis; L-leucine from 3-methyl-2-oxobutanoate: step 2/4. Functionally, catalyzes the isomerization between 2-isopropylmalate and 3-isopropylmalate, via the formation of 2-isopropylmaleate. This chain is 3-isopropylmalate dehydratase small subunit, found in Actinobacillus pleuropneumoniae serotype 7 (strain AP76).